A 392-amino-acid polypeptide reads, in one-letter code: Succinate--CoA ligase [ADP-forming] subunit beta (392 aa).

The ATP-grasp domain maps to 9–248 (KDILRKFGVA…ISEEDPFEVE (240 aa)). Residues lysine 50, 57–59 (GRG), glutamate 103, methionine 106, and glutamate 111 contribute to the ATP site. 2 residues coordinate Mg(2+): asparagine 203 and aspartate 217. Residues asparagine 268 and 325–327 (GIV) contribute to the substrate site.

Belongs to the succinate/malate CoA ligase beta subunit family. As to quaternary structure, heterotetramer of two alpha and two beta subunits. The cofactor is Mg(2+).

The enzyme catalyses succinate + ATP + CoA = succinyl-CoA + ADP + phosphate. The catalysed reaction is GTP + succinate + CoA = succinyl-CoA + GDP + phosphate. It participates in carbohydrate metabolism; tricarboxylic acid cycle; succinate from succinyl-CoA (ligase route): step 1/1. In terms of biological role, succinyl-CoA synthetase functions in the citric acid cycle (TCA), coupling the hydrolysis of succinyl-CoA to the synthesis of either ATP or GTP and thus represents the only step of substrate-level phosphorylation in the TCA. The beta subunit provides nucleotide specificity of the enzyme and binds the substrate succinate, while the binding sites for coenzyme A and phosphate are found in the alpha subunit. This is Succinate--CoA ligase [ADP-forming] subunit beta from Chlorobium phaeobacteroides (strain DSM 266 / SMG 266 / 2430).